The sequence spans 36 residues: Photosystem I reaction center subunit VIII (36 aa).

Residues phenylalanine 6–leucine 28 form a helical membrane-spanning segment.

It belongs to the PsaI family.

The protein resides in the plastid. Its subcellular location is the chloroplast thylakoid membrane. May help in the organization of the PsaL subunit. The chain is Photosystem I reaction center subunit VIII from Panax ginseng (Korean ginseng).